The sequence spans 499 residues: tRNA-specific adenosine deaminase 1 (499 aa).

The 436-residue stretch at 63–498 folds into the A to I editase domain; the sequence is SMGTGTKCIG…IRNPPDYHQF (436 aa). Position 87 (histidine 87) interacts with Zn(2+). The active-site Proton donor is the glutamate 89. Residues arginine 93 and arginine 94 each coordinate 1D-myo-inositol hexakisphosphate. A Zn(2+)-binding site is contributed by cysteine 142. Disordered regions lie at residues 170–194 and 212–237; these read PVQE…SPVA and HHGT…EPDA. Over residues 178–187 the composition is skewed to basic and acidic residues; sequence EDSKDKRNCE. At serine 191 the chain carries Phosphoserine. A Zn(2+)-binding site is contributed by cysteine 294. 1D-myo-inositol hexakisphosphate-binding residues include lysine 297, arginine 300, lysine 430, and lysine 466.

The protein belongs to the ADAT1 family. 1D-myo-inositol hexakisphosphate is required as a cofactor.

The enzyme catalyses adenosine(37) in tRNA(Ala) + H2O + H(+) = inosine(37) in tRNA(Ala) + NH4(+). Its function is as follows. Specifically deaminates adenosine-37 to inosine in tRNA-Ala. This chain is tRNA-specific adenosine deaminase 1 (Adat1), found in Mus musculus (Mouse).